The following is a 159-amino-acid chain: 2-C-methyl-D-erythritol 2,4-cyclodiphosphate synthase (159 aa).

A divalent metal cation-binding residues include Asp-10 and His-12. Residues 10–12 and 36–37 each bind 4-CDP-2-C-methyl-D-erythritol 2-phosphate; these read DVH and HS. A divalent metal cation is bound at residue His-44. Residues 58-60, 134-137, Phe-141, and Arg-144 contribute to the 4-CDP-2-C-methyl-D-erythritol 2-phosphate site; these read DIG and TTTE.

The protein belongs to the IspF family. In terms of assembly, homotrimer. It depends on a divalent metal cation as a cofactor.

The catalysed reaction is 4-CDP-2-C-methyl-D-erythritol 2-phosphate = 2-C-methyl-D-erythritol 2,4-cyclic diphosphate + CMP. The protein operates within isoprenoid biosynthesis; isopentenyl diphosphate biosynthesis via DXP pathway; isopentenyl diphosphate from 1-deoxy-D-xylulose 5-phosphate: step 4/6. Functionally, involved in the biosynthesis of isopentenyl diphosphate (IPP) and dimethylallyl diphosphate (DMAPP), two major building blocks of isoprenoid compounds. Catalyzes the conversion of 4-diphosphocytidyl-2-C-methyl-D-erythritol 2-phosphate (CDP-ME2P) to 2-C-methyl-D-erythritol 2,4-cyclodiphosphate (ME-CPP) with a corresponding release of cytidine 5-monophosphate (CMP). This is 2-C-methyl-D-erythritol 2,4-cyclodiphosphate synthase from Bacteroides thetaiotaomicron (strain ATCC 29148 / DSM 2079 / JCM 5827 / CCUG 10774 / NCTC 10582 / VPI-5482 / E50).